A 597-amino-acid polypeptide reads, in one-letter code: Arginine--tRNA ligase (597 aa).

Positions 137 to 147 (PNIAKEMHVGH) match the 'HIGH' region motif.

This sequence belongs to the class-I aminoacyl-tRNA synthetase family. As to quaternary structure, monomer.

The protein localises to the cytoplasm. The catalysed reaction is tRNA(Arg) + L-arginine + ATP = L-arginyl-tRNA(Arg) + AMP + diphosphate. The sequence is that of Arginine--tRNA ligase from Parasynechococcus marenigrum (strain WH8102).